Here is a 149-residue protein sequence, read N- to C-terminus: D-aminoacyl-tRNA deacylase (149 aa).

The Gly-cisPro motif, important for rejection of L-amino acids signature appears at 137–138; that stretch reads GP.

The protein belongs to the DTD family. As to quaternary structure, homodimer.

It is found in the cytoplasm. It carries out the reaction glycyl-tRNA(Ala) + H2O = tRNA(Ala) + glycine + H(+). The enzyme catalyses a D-aminoacyl-tRNA + H2O = a tRNA + a D-alpha-amino acid + H(+). Functionally, an aminoacyl-tRNA editing enzyme that deacylates mischarged D-aminoacyl-tRNAs. Also deacylates mischarged glycyl-tRNA(Ala), protecting cells against glycine mischarging by AlaRS. Acts via tRNA-based rather than protein-based catalysis; rejects L-amino acids rather than detecting D-amino acids in the active site. By recycling D-aminoacyl-tRNA to D-amino acids and free tRNA molecules, this enzyme counteracts the toxicity associated with the formation of D-aminoacyl-tRNA entities in vivo and helps enforce protein L-homochirality. In Syntrophomonas wolfei subsp. wolfei (strain DSM 2245B / Goettingen), this protein is D-aminoacyl-tRNA deacylase.